Reading from the N-terminus, the 1491-residue chain is Copper-transporting ATPase 1 (1491 aa).

The Cytoplasmic portion of the chain corresponds to M1–S644. HMA domains are found at residues N8 to L74 and T85 to G151. Cu(+)-binding residues include T18, C19, and C22. Residue T152 is modified to Phosphothreonine. Residues V171–F237 enclose the HMA 3 domain. Positions 182 and 185 each coordinate Cu(+). S270 carries the post-translational modification Phosphoserine. The HMA 4 domain maps to S277–Y343. Cu(+)-binding residues include C288 and C291. T327 is subject to Phosphothreonine. Phosphoserine occurs at positions 339, 353, 357, and 362. HMA domains are found at residues Q377–A443, N479–M545, and G555–S621. C388, C391, C490, C493, C566, and C569 together coordinate Cu(+). The helical transmembrane segment at F645–D666 threads the bilayer. Residues H667–L705 are Extracellular-facing. Residue N677 is glycosylated (N-linked (GlcNAc...) asparagine). Residues L706–Q725 form a helical membrane-spanning segment. Residues A726 to H732 lie on the Cytoplasmic side of the membrane. A helical membrane pass occupies residues K733 to L753. Residues V754–F772 lie on the Extracellular side of the membrane. Residues D773–K793 form a helical membrane-spanning segment. The Cytoplasmic portion of the chain corresponds to G794–D926. A helical membrane pass occupies residues K927–I950. Residues G951–F980 are Extracellular-facing. A glycan (N-linked (GlcNAc...) asparagine) is linked at N966. The helical transmembrane segment at Q981–A1002 threads the bilayer. Topologically, residues V1003–R1347 are cytoplasmic. D1035 (4-aspartylphosphate intermediate) is an active-site residue. E1072 is an ATP binding site. T1203 carries the post-translational modification Phosphothreonine. Mg(2+) is bound by residues D1292 and D1296. Residues I1348–A1365 form a helical membrane-spanning segment. The Extracellular portion of the chain corresponds to G1366–Q1376. The chain crosses the membrane as a helical span at residues P1377–L1396. Topologically, residues F1397–L1491 are cytoplasmic. Phosphoserine occurs at positions 1421, 1423, 1451, 1454, and 1457. Positions L1458–L1459 match the Endocytosis signal motif. A phosphoserine mark is found at S1460, S1464, S1467, and S1477. The interval S1477–L1491 is PDZD11-binding. The Endocytosis signal signature appears at L1478 to L1479.

The protein belongs to the cation transport ATPase (P-type) (TC 3.A.3) family. Type IB subfamily. In terms of assembly, monomer. Interacts with PDZD11. Interacts with ATOX1 and COMMD1. Interacts with TYRP1. Directly interacts with SOD3; this interaction is copper-dependent and is required for SOD3 activity. Widely expressed. Highly expressed in pituitary endocrine cells. Expressed in melanocytes (at protein level). Expressed in motor neuron (at protein level). Expressed in hippocampal neuron (at protein level). In the kidney, it is detected in the proximal and distal tubules (at protein level). Expressed in aorta (at protein level).

It is found in the golgi apparatus. Its subcellular location is the trans-Golgi network membrane. The protein localises to the cell membrane. The protein resides in the melanosome membrane. It localises to the early endosome membrane. It is found in the cell projection. Its subcellular location is the axon. The protein localises to the dendrite. The protein resides in the postsynaptic density. The catalysed reaction is Cu(+)(in) + ATP + H2O = Cu(+)(out) + ADP + phosphate + H(+). In terms of biological role, ATP-driven copper (Cu(+)) ion pump that plays an important role in intracellular copper ion homeostasis. Within a catalytic cycle, acquires Cu(+) ion from donor protein on the cytoplasmic side of the membrane and delivers it to acceptor protein on the lumenal side. The transfer of Cu(+) ion across the membrane is coupled to ATP hydrolysis and is associated with a transient phosphorylation that shifts the pump conformation from inward-facing to outward-facing state. Under physiological conditions, at low cytosolic copper concentration, it is localized at the trans-Golgi network (TGN) where it transfers Cu(+) ions to cuproenzymes of the secretory pathway. Upon elevated cytosolic copper concentrations, it relocalizes to the plasma membrane where it is responsible for the export of excess Cu(+) ions. May play a dual role in neuron function and survival by regulating cooper efflux and neuronal transmission at the synapse as well as by supplying Cu(+) ions to enzymes such as PAM, TYR and SOD3. In the melanosomes of pigmented cells, provides copper cofactor to TYR to form an active TYR holoenzyme for melanin biosynthesis. The protein is Copper-transporting ATPase 1 of Mus musculus (Mouse).